A 151-amino-acid polypeptide reads, in one-letter code: Protein Turandot Z (151 aa).

A signal peptide spans 1-23; it reads MSRLIHLSFVLALLACLTGTISA.

It belongs to the Turandot family.

The protein resides in the secreted. In terms of biological role, a humoral factor that may play a role in stress tolerance. The sequence is that of Protein Turandot Z from Drosophila persimilis (Fruit fly).